A 197-amino-acid chain; its full sequence is UPF0056 inner membrane protein YhgN (197 aa).

The Periplasmic segment spans residues methionine 1–glutamate 3. Residues isoleucine 4–phenylalanine 24 traverse the membrane as a helical segment. Topologically, residues methionine 25 to leucine 44 are cytoplasmic. Residues leucine 45–leucine 65 traverse the membrane as a helical segment. The Periplasmic segment spans residues serine 66–threonine 71. Residues valine 72 to alanine 92 traverse the membrane as a helical segment. Over serine 93–proline 105 the chain is Cytoplasmic. The chain crosses the membrane as a helical span at residues phenylalanine 106–leucine 126. Residues leucine 127–leucine 138 lie on the Periplasmic side of the membrane. The chain crosses the membrane as a helical span at residues valine 139–phenylalanine 159. Topologically, residues leucine 160–arginine 173 are cytoplasmic. The helical transmembrane segment at leucine 174–tryptophan 194 threads the bilayer. The Periplasmic portion of the chain corresponds to methionine 195–glycine 197.

The protein belongs to the UPF0056 (MarC) family.

It is found in the cell inner membrane. The chain is UPF0056 inner membrane protein YhgN (yhgN) from Escherichia coli O157:H7.